Reading from the N-terminus, the 217-residue chain is Zinc finger CCHC-type and RNA-binding motif-containing protein 1 (217 aa).

The 79-residue stretch at 10 to 88 folds into the RRM domain; that stretch reads STVYVSNLPF…RVIKASIAID (79 aa). The segment at 105 to 122 adopts a CCHC-type zinc-finger fold; sequence SKCYECGESGHLSYACPK. Positions 120 to 217 are disordered; that stretch reads CPKNMLGERE…YFSDEEELSD (98 aa). Over residues 145 to 163 the composition is skewed to acidic residues; the sequence is PEEEIEEVEVSEEEGEDPA. Residues S155, S210, and S216 each carry the phosphoserine modification.

Component of the U11/U12 snRNPs that are part of the U12-type spliceosome. Interacts with ZRSR1. In terms of tissue distribution, expressed at higher level in heart and testis, and at lower level in cerebellum. Weakly expressed at low level in liver.

It is found in the nucleus. The protein localises to the nucleoplasm. The protein is Zinc finger CCHC-type and RNA-binding motif-containing protein 1 (Zcrb1) of Mus musculus (Mouse).